Reading from the N-terminus, the 207-residue chain is ATP-dependent Clp protease proteolytic subunit (207 aa).

Ser111 serves as the catalytic Nucleophile. His136 is a catalytic residue.

The protein belongs to the peptidase S14 family. As to quaternary structure, fourteen ClpP subunits assemble into 2 heptameric rings which stack back to back to give a disk-like structure with a central cavity, resembling the structure of eukaryotic proteasomes.

The protein localises to the cytoplasm. It carries out the reaction Hydrolysis of proteins to small peptides in the presence of ATP and magnesium. alpha-casein is the usual test substrate. In the absence of ATP, only oligopeptides shorter than five residues are hydrolyzed (such as succinyl-Leu-Tyr-|-NHMec, and Leu-Tyr-Leu-|-Tyr-Trp, in which cleavage of the -Tyr-|-Leu- and -Tyr-|-Trp bonds also occurs).. Functionally, cleaves peptides in various proteins in a process that requires ATP hydrolysis. Has a chymotrypsin-like activity. Plays a major role in the degradation of misfolded proteins. This Aliivibrio salmonicida (strain LFI1238) (Vibrio salmonicida (strain LFI1238)) protein is ATP-dependent Clp protease proteolytic subunit.